The following is a 160-amino-acid chain: Ribosome-binding factor A (160 aa).

Basic and acidic residues predominate over residues 112–122; sequence KARQSDEKVRE. A disordered region spans residues 112 to 160; sequence KARQSDEKVREASAGATYAGEADPYRKPDEDETDTEGAVEADETDDTAK. A compositionally biased stretch (acidic residues) spans 141 to 160; the sequence is EDETDTEGAVEADETDDTAK.

The protein belongs to the RbfA family. In terms of assembly, monomer. Binds 30S ribosomal subunits, but not 50S ribosomal subunits or 70S ribosomes.

It is found in the cytoplasm. Functionally, one of several proteins that assist in the late maturation steps of the functional core of the 30S ribosomal subunit. Associates with free 30S ribosomal subunits (but not with 30S subunits that are part of 70S ribosomes or polysomes). Required for efficient processing of 16S rRNA. May interact with the 5'-terminal helix region of 16S rRNA. The chain is Ribosome-binding factor A from Streptomyces coelicolor (strain ATCC BAA-471 / A3(2) / M145).